Here is a 764-residue protein sequence, read N- to C-terminus: G-type lectin S-receptor-like serine/threonine-protein kinase SD3-1 (764 aa).

Positions 1-24 (MKMLRALLLCLSLVFFLAFQIVVS) are cleaved as a signal peptide. Bulb-type lectin domains follow at residues 25 to 151 (EIQL…QSFG) and 154 to 279 (TDTL…WKPV). The Extracellular segment spans residues 25–442 (EIQLGSKLVV…TKSHSICIPC (418 aa)). 3 N-linked (GlcNAc...) asparagine glycosylation sites follow: N92, N198, and N248. Residues 283 to 320 (VENQCRVFATCGSQVCSFNSSGYTECNCPFNAFVSVSD) enclose the EGF-like; atypical domain. Disulfide bonds link C287-C298, C293-C308, C332-C413, C365-C388, and C369-C375. N-linked (GlcNAc...) asparagine glycosylation is found at N301 and N353. Positions 332–413 (CKSGFNMVKF…LSSISYVKTC (82 aa)) constitute an Apple domain. N-linked (GlcNAc...) asparagine glycosylation is present at N423. The helical transmembrane segment at 443–463 (LVGATSTTLVLFLGFQLGIVV) threads the bilayer. At 464-764 (YIYRRKKKLA…SESSQSLYEP (301 aa)) the chain is on the cytoplasmic side. A Protein kinase domain is found at 466-764 (YRRKKKLAKK…SESSQSLYEP (299 aa)). ATP-binding positions include 508 to 516 (IGPQIFKGV) and K526. A caM-binding region spans residues 586–603 (LRSKKLTWRIRTDTCLSV). The disordered stretch occupies residues 738-764 (DPPPPPFACARSSPTNSSESSQSLYEP). Positions 749–764 (SSPTNSSESSQSLYEP) are enriched in low complexity.

The protein localises to the cell membrane. The catalysed reaction is L-seryl-[protein] + ATP = O-phospho-L-seryl-[protein] + ADP + H(+). It carries out the reaction L-threonyl-[protein] + ATP = O-phospho-L-threonyl-[protein] + ADP + H(+). The polypeptide is G-type lectin S-receptor-like serine/threonine-protein kinase SD3-1 (SD31) (Arabidopsis thaliana (Mouse-ear cress)).